Here is a 213-residue protein sequence, read N- to C-terminus: Ribosomal RNA small subunit methyltransferase G (213 aa).

Residues G72, F77, 125–126 (IE), and R141 each bind S-adenosyl-L-methionine.

Belongs to the methyltransferase superfamily. RNA methyltransferase RsmG family.

The protein resides in the cytoplasm. It catalyses the reaction guanosine(527) in 16S rRNA + S-adenosyl-L-methionine = N(7)-methylguanosine(527) in 16S rRNA + S-adenosyl-L-homocysteine. Specifically methylates the N7 position of guanine in position 527 of 16S rRNA. The polypeptide is Ribosomal RNA small subunit methyltransferase G (Rhizobium meliloti (strain 1021) (Ensifer meliloti)).